The sequence spans 128 residues: Fluoride-specific ion channel FluC (128 aa).

Transmembrane regions (helical) follow at residues 4-24 (VFLL…VSTW), 35-55 (FGIL…WSIA), 67-87 (FLFT…LDTM), and 99-119 (LLNV…GIIL). Residues G74 and T77 each coordinate Na(+).

It belongs to the fluoride channel Fluc/FEX (TC 1.A.43) family.

Its subcellular location is the cell inner membrane. It catalyses the reaction fluoride(in) = fluoride(out). Na(+) is not transported, but it plays an essential structural role and its presence is essential for fluoride channel function. Its function is as follows. Fluoride-specific ion channel. Important for reducing fluoride concentration in the cell, thus reducing its toxicity. This Parabacteroides distasonis (strain ATCC 8503 / DSM 20701 / CIP 104284 / JCM 5825 / NCTC 11152) protein is Fluoride-specific ion channel FluC.